The chain runs to 375 residues: Peritrophin-48 (375 aa).

Residues 1 to 20 (MIIKTLLASVAIMLIATVNA) form the signal peptide. Chitin-binding type-2 domains follow at residues 25 to 83 (AKYC…NCIL), 86 to 143 (DNPC…SDDD), 153 to 210 (LNIC…MCER), 224 to 292 (ETLC…GCNR), and 294 to 360 (EYTT…ACQN). Residues Cys-60 and Cys-73 are joined by a disulfide bond. The N-linked (GlcNAc...) asparagine glycan is linked to Asn-117. 4 cysteine pairs are disulfide-bonded: Cys-120–Cys-133, Cys-187–Cys-200, Cys-265–Cys-278, and Cys-330–Cys-343. An N-linked (GlcNAc...) asparagine glycan is attached at Asn-360.

Glycosylated. Cardia and midgut peritrophic membrane.

Functionally, may bind chitin or related oligosaccharide structures. The chain is Peritrophin-48 from Lucilia cuprina (Green bottle fly).